We begin with the raw amino-acid sequence, 141 residues long: Hemoglobin subunit alpha-D (141 aa).

The region spanning 1 to 141 (MLTAEDKKLI…VAAVLAGKYR (141 aa)) is the Globin domain. Residues His-58 and His-87 each coordinate heme b.

Belongs to the globin family. As to quaternary structure, heterotetramer of two alpha-D chains and two beta chains. In terms of tissue distribution, red blood cells.

Involved in oxygen transport from the lung to the various peripheral tissues. The sequence is that of Hemoglobin subunit alpha-D (HBAD) from Coturnix japonica (Japanese quail).